Reading from the N-terminus, the 448-residue chain is ATP-dependent protease ATPase subunit HslU (448 aa).

ATP is bound by residues valine 21, glycine 63–glutamate 68, aspartate 260, glutamate 326, and arginine 398.

It belongs to the ClpX chaperone family. HslU subfamily. In terms of assembly, a double ring-shaped homohexamer of HslV is capped on each side by a ring-shaped HslU homohexamer. The assembly of the HslU/HslV complex is dependent on binding of ATP.

The protein resides in the cytoplasm. Functionally, ATPase subunit of a proteasome-like degradation complex; this subunit has chaperone activity. The binding of ATP and its subsequent hydrolysis by HslU are essential for unfolding of protein substrates subsequently hydrolyzed by HslV. HslU recognizes the N-terminal part of its protein substrates and unfolds these before they are guided to HslV for hydrolysis. The protein is ATP-dependent protease ATPase subunit HslU of Sulfurihydrogenibium sp. (strain YO3AOP1).